The chain runs to 149 residues: Transcriptional regulator MraZ (149 aa).

2 consecutive SpoVT-AbrB domains span residues 6 to 52 (HAHR…TPPD) and 81 to 124 (SEEV…DKRE).

Belongs to the MraZ family. Forms oligomers.

It localises to the cytoplasm. Its subcellular location is the nucleoid. The polypeptide is Transcriptional regulator MraZ (Maridesulfovibrio salexigens (strain ATCC 14822 / DSM 2638 / NCIMB 8403 / VKM B-1763) (Desulfovibrio salexigens)).